The primary structure comprises 354 residues: Uroporphyrinogen decarboxylase (354 aa).

Substrate contacts are provided by residues 28-32 (RQAGR), aspartate 78, tyrosine 155, serine 210, and histidine 325.

It belongs to the uroporphyrinogen decarboxylase family. In terms of assembly, homodimer.

Its subcellular location is the cytoplasm. It catalyses the reaction uroporphyrinogen III + 4 H(+) = coproporphyrinogen III + 4 CO2. Its pathway is porphyrin-containing compound metabolism; protoporphyrin-IX biosynthesis; coproporphyrinogen-III from 5-aminolevulinate: step 4/4. In terms of biological role, catalyzes the decarboxylation of four acetate groups of uroporphyrinogen-III to yield coproporphyrinogen-III. The sequence is that of Uroporphyrinogen decarboxylase from Crocosphaera subtropica (strain ATCC 51142 / BH68) (Cyanothece sp. (strain ATCC 51142)).